The chain runs to 765 residues: Lysyl oxidase homolog 2 (765 aa).

An N-terminal signal peptide occupies residues 1 to 19; it reads MLVSHVFLLTLSLSVPSLG. SRCR domains follow at residues 49–150, 179–293, 317–416, and 426–535; these read VRLA…VQCS, IRPI…VSCT, VRLR…VRCN, and VRLS…VSCV. Cystine bridges form between Cys-75–Cys-139, Cys-88–Cys-149, Cys-119–Cys-129, Cys-209–Cys-282, Cys-222–Cys-292, Cys-256–Cys-266, Cys-342–Cys-405, Cys-355–Cys-415, and Cys-386–Cys-396. An N-linked (GlcNAc...) asparagine glycan is attached at Asn-279. An N-linked (GlcNAc...) asparagine glycan is attached at Asn-446. 3 disulfide bridges follow: Cys-455/Cys-521, Cys-468/Cys-534, and Cys-502/Cys-512. The lysyl-oxidase like stretch occupies residues 539–742; sequence PDLVLNAALV…WMYNCHIGGS (204 aa). Asp-540 and Leu-541 together coordinate Ca(2+). Intrachain disulfides connect Cys-564/Cys-616, Cys-570/Cys-686, Cys-648/Cys-664, and Cys-654/Cys-676. Residues His-617, His-619, and His-621 each coordinate Cu cation. N-linked (GlcNAc...) asparagine glycosylation occurs at Asn-635. Positions 644-680 form a cross-link, lysine tyrosylquinone (Lys-Tyr); the sequence is KASFCLEDSECEADIQKQYVCANFGEQGITVGCWDLY. Tyr-680 carries the 2',4',5'-topaquinone modification. Glu-713, Asp-715, Asn-718, and Asn-719 together coordinate Ca(2+). An intrachain disulfide couples Cys-723 to Cys-737.

This sequence belongs to the lysyl oxidase family. Cu cation serves as cofactor. The cofactor is lysine tyrosylquinone residue. The lysine tyrosylquinone cross-link (LTQ) is generated by condensation of the epsilon-amino group of a lysine with a topaquinone produced by oxidation of tyrosine.

The protein localises to the secreted. The protein resides in the extracellular space. Its subcellular location is the extracellular matrix. It is found in the basement membrane. It localises to the nucleus. The protein localises to the chromosome. The protein resides in the endoplasmic reticulum. It carries out the reaction L-lysyl-[protein] + O2 + H2O = (S)-2-amino-6-oxohexanoyl-[protein] + H2O2 + NH4(+). In terms of biological role, mediates the post-translational oxidative deamination of lysine residues on target proteins leading to the formation of deaminated lysine (allysine). Acts as a transcription corepressor and specifically mediates deamination of trimethylated 'Lys-4' of histone H3 (H3K4me3), a specific tag for epigenetic transcriptional activation. Shows no activity against histone H3 when it is trimethylated on 'Lys-9' (H3K9me3) or 'Lys-27' (H3K27me3) or when 'Lys-4' is monomethylated (H3K4me1) or dimethylated (H3K4me2). Also mediates deamination of methylated TAF10, a member of the transcription factor IID (TFIID) complex, which induces release of TAF10 from promoters, leading to inhibition of TFIID-dependent transcription. LOXL2-mediated deamination of TAF10 results in transcriptional repression of genes required for embryonic stem cell pluripotency. Involved in epithelial to mesenchymal transition (EMT) and participates in repression of E-cadherin, probably by mediating deamination of histone H3. When secreted into the extracellular matrix, promotes cross-linking of extracellular matrix proteins by mediating oxidative deamination of peptidyl lysine residues in precursors to fibrous collagen and elastin. Acts as a regulator of sprouting angiogenesis, probably via collagen IV scaffolding. Acts as a regulator of chondrocyte differentiation, probably by regulating expression of factors that control chondrocyte differentiation. The sequence is that of Lysyl oxidase homolog 2 (loxl2) from Xenopus laevis (African clawed frog).